Here is a 92-residue protein sequence, read N- to C-terminus: Small ribosomal subunit protein uS19 (92 aa).

Belongs to the universal ribosomal protein uS19 family.

In terms of biological role, protein S19 forms a complex with S13 that binds strongly to the 16S ribosomal RNA. This is Small ribosomal subunit protein uS19 from Vibrio vulnificus (strain CMCP6).